Here is a 220-residue protein sequence, read N- to C-terminus: MRVGVVVFPGSNCDRDALHAVERAGAEPVELWHADADLKGSDAVILPGGFSYGDYLRPGAIARFARVMGPLEAFAREGGPVLGVCNGFQVLCEAHLLPGALLQNRGLRFVCRRVRVRVERADTPWTAACAPGEELTLPVAHNEGNYFADPATLARLEEEGRVVLRYLENPNGSANDIAGVCSEGRNVVGLMPHPERASDPLLGSGEGLGILRSVLAGAKV.

The region spanning 2–220 is the Glutamine amidotransferase type-1 domain; sequence RVGVVVFPGS…LRSVLAGAKV (219 aa). Residue Cys85 is the Nucleophile of the active site. Catalysis depends on residues His193 and Glu195.

As to quaternary structure, part of the FGAM synthase complex composed of 1 PurL, 1 PurQ and 2 PurS subunits.

It localises to the cytoplasm. It catalyses the reaction N(2)-formyl-N(1)-(5-phospho-beta-D-ribosyl)glycinamide + L-glutamine + ATP + H2O = 2-formamido-N(1)-(5-O-phospho-beta-D-ribosyl)acetamidine + L-glutamate + ADP + phosphate + H(+). The enzyme catalyses L-glutamine + H2O = L-glutamate + NH4(+). It functions in the pathway purine metabolism; IMP biosynthesis via de novo pathway; 5-amino-1-(5-phospho-D-ribosyl)imidazole from N(2)-formyl-N(1)-(5-phospho-D-ribosyl)glycinamide: step 1/2. In terms of biological role, part of the phosphoribosylformylglycinamidine synthase complex involved in the purines biosynthetic pathway. Catalyzes the ATP-dependent conversion of formylglycinamide ribonucleotide (FGAR) and glutamine to yield formylglycinamidine ribonucleotide (FGAM) and glutamate. The FGAM synthase complex is composed of three subunits. PurQ produces an ammonia molecule by converting glutamine to glutamate. PurL transfers the ammonia molecule to FGAR to form FGAM in an ATP-dependent manner. PurS interacts with PurQ and PurL and is thought to assist in the transfer of the ammonia molecule from PurQ to PurL. The polypeptide is Phosphoribosylformylglycinamidine synthase subunit PurQ (Rubrobacter xylanophilus (strain DSM 9941 / JCM 11954 / NBRC 16129 / PRD-1)).